Reading from the N-terminus, the 91-residue chain is MNKLINIGFGNVVNAGKIISVIRPEAAPVKRMVQNAKDSGSCVDATCGRKCKAVVVMETGQIVLSALLPETIANRVNQRESIESNEVFQAL.

This sequence belongs to the RemA family.

This Lachnoclostridium phytofermentans (strain ATCC 700394 / DSM 18823 / ISDg) (Clostridium phytofermentans) protein is Putative regulatory protein Cphy_2880.